The following is a 473-amino-acid chain: Lactococcin A secretion protein LcnD-like (473 aa).

Over 1–21 (MFDKKLLESSELYDKRYRNFS) the chain is Cytoplasmic. A helical membrane pass occupies residues 22 to 44 (TLIILPLFILLVGGVIFTFFAHK). Topologically, residues 45–473 (ELTVISTGSI…FLDKIMGRTS (429 aa)) are extracellular.

The protein belongs to the membrane fusion protein (MFP) (TC 8.A.1) family.

The protein localises to the cell membrane. Its function is as follows. Involved in the secretion of a lactococcin. In Lactococcus lactis subsp. lactis (strain IL1403) (Streptococcus lactis), this protein is Lactococcin A secretion protein LcnD-like (lcnD).